The sequence spans 209 residues: Uracil phosphoribosyltransferase (209 aa).

5-phospho-alpha-D-ribose 1-diphosphate contacts are provided by residues Arg79, Arg104, and 131 to 139 (DPMLATGGT). Uracil contacts are provided by residues Ile194 and 199–201 (GDA). Position 200 (Asp200) interacts with 5-phospho-alpha-D-ribose 1-diphosphate.

The protein belongs to the UPRTase family. Requires Mg(2+) as cofactor.

The catalysed reaction is UMP + diphosphate = 5-phospho-alpha-D-ribose 1-diphosphate + uracil. It participates in pyrimidine metabolism; UMP biosynthesis via salvage pathway; UMP from uracil: step 1/1. Allosterically activated by GTP. Functionally, catalyzes the conversion of uracil and 5-phospho-alpha-D-ribose 1-diphosphate (PRPP) to UMP and diphosphate. The polypeptide is Uracil phosphoribosyltransferase (Pseudoalteromonas atlantica (strain T6c / ATCC BAA-1087)).